Reading from the N-terminus, the 405-residue chain is MFEGYPVDTANTAGDQAVTNYTINFGPQHPAAHGVLRMVMELDGEIIERVDPHVGLLHRGTEKLIEYKTYLQALPYFDRLDYCSPLGMEHSYVLAIEKLLDLEVPARAQYLRTMFAELTRICNHMLNIGSHVMDVGAMTPNLWVFELREDCLNFFERASGARMHSAYFRPGGVHQDVPEKLLVDIGEWVETRLPKLFGDAMSLVIDNRIFKQRNVDIATVSKEDALAWGFSGPMIRGSGIAWDLRKSQPYDAYAAMEFDIPVGTRGDCYDRFMVRVEEVYQSAKIIKQCLRDMPTGPIASLDRKVVPPKRGEMKQSMESLIHHFKLYTEGFHVPAGEVYVATESPKGEFGVYLVSDGTNKPYRCKIRPTAFSHLQAMDMMSKGHMLADTTAIIGAIDVVFGECDR.

It belongs to the complex I 49 kDa subunit family. NDH-1 is composed of 14 different subunits. Subunits NuoB, C, D, E, F, and G constitute the peripheral sector of the complex.

It is found in the cell inner membrane. The catalysed reaction is a quinone + NADH + 5 H(+)(in) = a quinol + NAD(+) + 4 H(+)(out). Its function is as follows. NDH-1 shuttles electrons from NADH, via FMN and iron-sulfur (Fe-S) centers, to quinones in the respiratory chain. The immediate electron acceptor for the enzyme in this species is believed to be ubiquinone. Couples the redox reaction to proton translocation (for every two electrons transferred, four hydrogen ions are translocated across the cytoplasmic membrane), and thus conserves the redox energy in a proton gradient. This is NADH-quinone oxidoreductase subunit D from Sphingopyxis alaskensis (strain DSM 13593 / LMG 18877 / RB2256) (Sphingomonas alaskensis).